A 607-amino-acid chain; its full sequence is Nexilin (607 aa).

Residues 1–14 are compositionally biased toward basic and acidic residues; sequence MNDVSQKAEIKEML. 2 disordered regions span residues 1–143 and 165–268; these read MNDV…EDKM and ETEA…RRRI. Ser16 carries the phosphoserine modification. Composition is skewed to basic and acidic residues over residues 40–85, 120–143, 167–221, and 228–268; these read GKFD…RAEQ, KTKD…EDKM, EAKK…HMVN, and DRET…RRRI. Ser172 is subject to Phosphoserine. Residues Ser281, Ser288, and Ser296 each carry the phosphoserine modification. Residue Thr301 is modified to Phosphothreonine. Disordered regions lie at residues 419–444 and 480–514; these read NFHE…KVNM and AALQ…GAPW. Phosphoserine is present on residues Ser495 and Ser500. Thr502 carries the post-translational modification Phosphothreonine. An Ig-like domain is found at 513 to 601; that stretch reads PWFKKPLRNT…GSAASTCILT (89 aa).

As to quaternary structure, interacts with F-actin.

Its subcellular location is the cytoplasm. It localises to the cytoskeleton. It is found in the cell junction. The protein localises to the adherens junction. The protein resides in the myofibril. Its subcellular location is the sarcomere. It localises to the z line. Functionally, involved in regulating cell migration through association with the actin cytoskeleton. Has an essential role in the maintenance of Z line and sarcomere integrity. The polypeptide is Nexilin (Mus musculus (Mouse)).